The primary structure comprises 606 residues: Methionine--tRNA ligase (606 aa).

The 'HIGH' region signature appears at 14 to 24 (PYANGPRHIGH). Zn(2+) is bound by residues Cys-146, Cys-149, Cys-159, and Cys-162. The short motif at 351 to 355 (KFSSS) is the 'KMSKS' region element. Ser-354 contributes to the ATP binding site.

Belongs to the class-I aminoacyl-tRNA synthetase family. MetG type 1 subfamily. Monomer. It depends on Zn(2+) as a cofactor.

The protein resides in the cytoplasm. The catalysed reaction is tRNA(Met) + L-methionine + ATP = L-methionyl-tRNA(Met) + AMP + diphosphate. In terms of biological role, is required not only for elongation of protein synthesis but also for the initiation of all mRNA translation through initiator tRNA(fMet) aminoacylation. This is Methionine--tRNA ligase from Thermobifida fusca (strain YX).